The sequence spans 154 residues: 6,7-dimethyl-8-ribityllumazine synthase (154 aa).

Residues F22, 56-58, and 80-82 contribute to the 5-amino-6-(D-ribitylamino)uracil site; these read SFE and AVI. 85–86 serves as a coordination point for (2S)-2-hydroxy-3-oxobutyl phosphate; the sequence is ST. The active-site Proton donor is H88. Y113 provides a ligand contact to 5-amino-6-(D-ribitylamino)uracil. Residue R127 participates in (2S)-2-hydroxy-3-oxobutyl phosphate binding.

This sequence belongs to the DMRL synthase family. Forms an icosahedral capsid composed of 60 subunits, arranged as a dodecamer of pentamers.

It carries out the reaction (2S)-2-hydroxy-3-oxobutyl phosphate + 5-amino-6-(D-ribitylamino)uracil = 6,7-dimethyl-8-(1-D-ribityl)lumazine + phosphate + 2 H2O + H(+). It functions in the pathway cofactor biosynthesis; riboflavin biosynthesis; riboflavin from 2-hydroxy-3-oxobutyl phosphate and 5-amino-6-(D-ribitylamino)uracil: step 1/2. In terms of biological role, catalyzes the formation of 6,7-dimethyl-8-ribityllumazine by condensation of 5-amino-6-(D-ribitylamino)uracil with 3,4-dihydroxy-2-butanone 4-phosphate. This is the penultimate step in the biosynthesis of riboflavin. This Persephonella marina (strain DSM 14350 / EX-H1) protein is 6,7-dimethyl-8-ribityllumazine synthase.